Here is a 374-residue protein sequence, read N- to C-terminus: MNPATTEFVRQRFAEYYRKAMLVSPSSLAQREWGFVLFNPGAAELRMRRHIAFPERTELFDYIRNLVPSHVYYSSAYYEKPDAPTMAEKGWCGADLIFDLDADHIVKGPYDQMLSRVKTETEKLLAMLTEELGIDSKQIELVFSGGRGYHVHVRDLAFRGWGSAERRELVDYICGIGIDPAVLLNGGLVPGWPARFRSALAEYIGWLGTLSEDGAMAHLTSLEGVGKESAAGFLKKRAEILAGLSGEIDPTLLKDRVIKAVVHETEGEFRKRLNEKAALADEPVTTDIKRLIRMPTSIHGGSGMRVQPLELRDLPDFDPLVDAVVFSAREVRVDARFPLAMPMLGSTYQIQKGISTVPEAVGVFLCCRGIAEIA.

Residues D99, D101, and D281 contribute to the active site.

The protein belongs to the eukaryotic-type primase small subunit family. As to quaternary structure, heterodimer of a small subunit (PriS) and a large subunit (PriL). The cofactor is Mg(2+). Mn(2+) is required as a cofactor.

Functionally, catalytic subunit of DNA primase, an RNA polymerase that catalyzes the synthesis of short RNA molecules used as primers for DNA polymerase during DNA replication. The small subunit contains the primase catalytic core and has DNA synthesis activity on its own. Binding to the large subunit stabilizes and modulates the activity, increasing the rate of DNA synthesis while decreasing the length of the DNA fragments, and conferring RNA synthesis capability. The DNA polymerase activity may enable DNA primase to also catalyze primer extension after primer synthesis. May also play a role in DNA repair. The sequence is that of DNA primase small subunit PriS from Methanoregula boonei (strain DSM 21154 / JCM 14090 / 6A8).